The sequence spans 243 residues: Aspartate/glutamate leucyltransferase (243 aa).

Belongs to the R-transferase family. Bpt subfamily.

Its subcellular location is the cytoplasm. It carries out the reaction N-terminal L-glutamyl-[protein] + L-leucyl-tRNA(Leu) = N-terminal L-leucyl-L-glutamyl-[protein] + tRNA(Leu) + H(+). It catalyses the reaction N-terminal L-aspartyl-[protein] + L-leucyl-tRNA(Leu) = N-terminal L-leucyl-L-aspartyl-[protein] + tRNA(Leu) + H(+). Its function is as follows. Functions in the N-end rule pathway of protein degradation where it conjugates Leu from its aminoacyl-tRNA to the N-termini of proteins containing an N-terminal aspartate or glutamate. This chain is Aspartate/glutamate leucyltransferase, found in Teredinibacter turnerae (strain ATCC 39867 / T7901).